We begin with the raw amino-acid sequence, 251 residues long: Zinc import ATP-binding protein ZnuC (251 aa).

Positions 5 to 220 constitute an ABC transporter domain; the sequence is VSLENVSVSF…PEFISMFGPR (216 aa). 37–44 lines the ATP pocket; that stretch reads GPNGAGKS.

It belongs to the ABC transporter superfamily. Zinc importer (TC 3.A.1.15.5) family. As to quaternary structure, the complex is composed of two ATP-binding proteins (ZnuC), two transmembrane proteins (ZnuB) and a solute-binding protein (ZnuA).

The protein resides in the cell inner membrane. It carries out the reaction Zn(2+)(out) + ATP(in) + H2O(in) = Zn(2+)(in) + ADP(in) + phosphate(in) + H(+)(in). Part of the ABC transporter complex ZnuABC involved in zinc import. Responsible for energy coupling to the transport system. The protein is Zinc import ATP-binding protein ZnuC of Escherichia coli O157:H7.